Here is a 258-residue protein sequence, read N- to C-terminus: UPF0758 protein BamMC406_2419 (258 aa).

A disordered region spans residues Cys-13–Pro-42. Positions Arg-31–Pro-42 are enriched in basic residues. One can recognise an MPN domain in the interval Gln-136–Leu-258. Zn(2+)-binding residues include His-207, His-209, and Asp-220. The JAMM motif motif lies at His-207–Asp-220.

This sequence belongs to the UPF0758 family.

The protein is UPF0758 protein BamMC406_2419 of Burkholderia ambifaria (strain MC40-6).